The chain runs to 51 residues: Perinerin (51 aa).

Functionally, antibacterial activity against both Gram-negative and Gram-positive bacteria. Shows marked activity against P.aeruginosa, B.megaterium, A.viridans, moderate activity against E.coli K-12, S.aureus and M.luteus, and minor activity against P.vulgaris. Antifungal activity against P.heliothis. The sequence is that of Perinerin from Perinereis aibuhitensis (Korean lugworm).